The primary structure comprises 567 residues: DNA ligase B (567 aa).

The active-site N6-AMP-lysine intermediate is Lys132.

It belongs to the NAD-dependent DNA ligase family. LigB subfamily.

It catalyses the reaction NAD(+) + (deoxyribonucleotide)n-3'-hydroxyl + 5'-phospho-(deoxyribonucleotide)m = (deoxyribonucleotide)n+m + AMP + beta-nicotinamide D-nucleotide.. Catalyzes the formation of phosphodiester linkages between 5'-phosphoryl and 3'-hydroxyl groups in double-stranded DNA using NAD as a coenzyme and as the energy source for the reaction. The chain is DNA ligase B from Yersinia pestis.